The chain runs to 301 residues: tRNA dimethylallyltransferase (301 aa).

An ATP-binding site is contributed by 12–19 (GPTASGKT). Substrate is bound at residue 14–19 (TASGKT). The interval 37–40 (DSLS) is interaction with substrate tRNA.

Belongs to the IPP transferase family. In terms of assembly, monomer. It depends on Mg(2+) as a cofactor.

It catalyses the reaction adenosine(37) in tRNA + dimethylallyl diphosphate = N(6)-dimethylallyladenosine(37) in tRNA + diphosphate. In terms of biological role, catalyzes the transfer of a dimethylallyl group onto the adenine at position 37 in tRNAs that read codons beginning with uridine, leading to the formation of N6-(dimethylallyl)adenosine (i(6)A). This Sulfurovum sp. (strain NBC37-1) protein is tRNA dimethylallyltransferase.